Reading from the N-terminus, the 329-residue chain is Trem-like transcript 2 protein (329 aa).

The N-terminal stretch at 1–24 (MEPWPLTFLLLLLLLLWLQGCVSG) is a signal peptide. The 102-residue stretch at 25 to 126 (HSNENLYRKV…HFYPLVGFQL (102 aa)) folds into the Ig-like V-type domain. Residues 25-270 (HSNENLYRKV…NRSQETYIPA (246 aa)) lie on the Extracellular side of the membrane. 2 disulfide bridges follow: cysteine 46/cysteine 110 and cysteine 61/cysteine 68. The tract at residues 202-259 (FIDTSGTVTEPERNTESQPATLSPSNARSFSADPVTTSTMSRHQSSSLSTTGTCHPLT) is disordered. The span at 217-259 (ESQPATLSPSNARSFSADPVTTSTMSRHQSSSLSTTGTCHPLT) shows a compositional bias: polar residues. N-linked (GlcNAc...) asparagine glycosylation is present at asparagine 261. Residues 271-291 (MVVVLTFLPAPVVLVVAYGFW) form a helical membrane-spanning segment. Over 292–329 (KKRHMGRYNLGSNYAKPWIHLPEGPETPWKPAWSKITQ) the chain is Cytoplasmic.

In terms of assembly, interacts with CD276 and this interaction enhances T-cell activation. Detected in B-lymphocytes and macrophages. Detected in spleen, lymph nodes, blood, bone marrow and cells from the peritoneal cavity (at protein level).

It is found in the cell membrane. Functionally, cell surface receptor that may play a role in the innate and adaptive immune response. Acts as a counter-receptor for CD276 and interaction with CD276 on T-cells enhances T-cell activation. The polypeptide is Trem-like transcript 2 protein (Treml2) (Mus musculus (Mouse)).